The sequence spans 334 residues: Beta-hexosaminidase (334 aa).

Residues Asp-62, Arg-70, Arg-131, and Lys-161 to His-162 each bind substrate. The active-site Proton donor/acceptor is His-174. The Nucleophile role is filled by Asp-246.

The protein belongs to the glycosyl hydrolase 3 family. NagZ subfamily.

It localises to the cytoplasm. The enzyme catalyses Hydrolysis of terminal non-reducing N-acetyl-D-hexosamine residues in N-acetyl-beta-D-hexosaminides.. It functions in the pathway cell wall biogenesis; peptidoglycan recycling. Functionally, plays a role in peptidoglycan recycling by cleaving the terminal beta-1,4-linked N-acetylglucosamine (GlcNAc) from peptide-linked peptidoglycan fragments, giving rise to free GlcNAc, anhydro-N-acetylmuramic acid and anhydro-N-acetylmuramic acid-linked peptides. The sequence is that of Beta-hexosaminidase from Tolumonas auensis (strain DSM 9187 / NBRC 110442 / TA 4).